Here is a 984-residue protein sequence, read N- to C-terminus: Ephrin type-B receptor 1 (984 aa).

The N-terminal stretch at 1 to 17 (MALDCLLLFLLASAVAA) is a signal peptide. At 18 to 540 (MEETLMDTRT…YKSELREQLP (523 aa)) the chain is on the extracellular side. Residues 19–201 (EETLMDTRTA…FFKKCPSIVQ (183 aa)) form the Eph LBD domain. Fibronectin type-III domains are found at residues 322–432 (VPSG…TNQA) and 433–528 (APST…TLTD). Asn-334, Asn-426, and Asn-480 each carry an N-linked (GlcNAc...) asparagine glycan. A helical transmembrane segment spans residues 541-563 (LIAGSAAAGVVFVVSLVAISIVC). At 564–984 (SRKRAYSKEA…QMNQSPSVMA (421 aa)) the chain is on the cytoplasmic side. The residue at position 600 (Tyr-600) is a Phosphotyrosine. Residues 619–882 (VKIEEVIGAG…EIVNTLDKMI (264 aa)) form the Protein kinase domain. ATP-binding positions include 625–633 (IGAGEFGEV) and Lys-651. Asp-744 serves as the catalytic Proton acceptor. An SAM domain is found at 911–975 (TAFTTVDDWL…LSSIHSMRVQ (65 aa)). Tyr-928 is subject to Phosphotyrosine; by autocatalysis. Residues 982–984 (VMA) carry the PDZ-binding motif.

The protein belongs to the protein kinase superfamily. Tyr protein kinase family. Ephrin receptor subfamily. In terms of assembly, heterotetramer upon binding of the ligand. The heterotetramer is composed of an ephrin dimer and a receptor dimer. Oligomerization is probably required to induce biological responses. Interacts with EPHB6; transphosphorylates EPHB6 to form an active signaling complex. Interacts with PICK1. Interacts (through Tyr-594) with NCK1 (via SH2 domain); activates the JUN cascade to regulate cell adhesion. The ligand-activated form interacts (through Tyr-928) with GRB7 and GRB10 (via SH2 domains). The ligand-activated form interacts (residues within the catalytic domain) with GRB2 (via SH2 domain). Interacts with GRB2, SHC1 and SRC; activates the MAPK/ERK cascade to regulate cell migration. Interacts with CBL; regulates receptor degradation through ubiquitination. Interacts with ACP1. In terms of processing, phosphorylated. Autophosphorylation is stimulated by the ligand EFNB1. Required for interaction with SH2 domain-containing interactors, for activation of the MAPK/ERK and JUN signaling cascades and for ubiquitination by CBL. Ubiquitinated; (EFNB1)ligand-induced poly- and/or multi-ubiquitination by CBL is regulated by SRC and leads to lysosomal degradation. In terms of tissue distribution, expressed in neural stem and progenitor cells in the dentate gyrus. Expressed in myogenic progenitor cells.

Its subcellular location is the cell membrane. The protein localises to the early endosome membrane. It localises to the cell projection. It is found in the dendrite. It carries out the reaction L-tyrosyl-[protein] + ATP = O-phospho-L-tyrosyl-[protein] + ADP + H(+). In terms of biological role, receptor tyrosine kinase which binds promiscuously transmembrane ephrin-B family ligands residing on adjacent cells, leading to contact-dependent bidirectional signaling into neighboring cells. The signaling pathway downstream of the receptor is referred to as forward signaling while the signaling pathway downstream of the ephrin ligand is referred to as reverse signaling. Cognate/functional ephrin ligands for this receptor include EFNB1, EFNB2 and EFNB3. During nervous system development, regulates retinal axon guidance redirecting ipsilaterally ventrotemporal retinal ganglion cells axons at the optic chiasm midline. This probably requires repulsive interaction with EFNB2. In the adult nervous system together with EFNB3, regulates chemotaxis, proliferation and polarity of the hippocampus neural progenitors. In addition to its role in axon guidance also plays an important redundant role with other ephrin-B receptors in development and maturation of dendritic spines and synapse formation. May also regulate angiogenesis. More generally, may play a role in targeted cell migration and adhesion. Upon activation by EFNB1 and probably other ephrin-B ligands activates the MAPK/ERK and the JNK signaling cascades to regulate cell migration and adhesion respectively. Involved in the maintenance of the pool of satellite cells (muscle stem cells) by promoting their self-renewal and reducing their activation and differentiation. The sequence is that of Ephrin type-B receptor 1 (Ephb1) from Mus musculus (Mouse).